Reading from the N-terminus, the 158-residue chain is UPF0266 membrane protein YobD (158 aa).

Transmembrane regions (helical) follow at residues 6 to 26, 45 to 65, and 67 to 87; these read LVLILFIAALLAFAIYDQFIM, IDSVIFVGLIVILIYNNVTNH, and ALITTWLLSALALMGFYIFWI.

Belongs to the UPF0266 family.

Its subcellular location is the cell inner membrane. The protein is UPF0266 membrane protein YobD of Shigella boydii serotype 4 (strain Sb227).